Reading from the N-terminus, the 393-residue chain is Metal tolerance protein C2 (393 aa).

Positions 1-23 are disordered; the sequence is MERSISFNPRGDNELPDDRSSDV. At 1–113 the chain is on the cytoplasmic side; that stretch reads MERSISFNPR…VTSGNRQMKR (113 aa). Basic and acidic residues predominate over residues 11–21; the sequence is GDNELPDDRSS. A helical transmembrane segment spans residues 114–134; it reads LFLLIALNVLYSTTELSIGIF. Over 135-139 the chain is Vacuolar; it reads TGRVG. A helical transmembrane segment spans residues 140-160; the sequence is LVSDAFHLTFGCGLLTFSLFA. Residues 161 to 186 lie on the Cytoplasmic side of the membrane; that stretch reads MATSRKKPDHAYSYGYKRLEVLSAFT. Residues 187-207 traverse the membrane as a helical segment; it reads NALFLMFMSFSLAVEALHAFI. Residues 208–214 lie on the Vacuolar side of the membrane; that stretch reads QDESEHK. The chain crosses the membrane as a helical span at residues 215 to 235; sequence HYLIVSAVTNLLVNLLGVWFF. At 236 to 259 the chain is on the cytoplasmic side; it reads RNYARVNIAYRKAEDMNYHSVCLH. Residues 260-280 form a helical membrane-spanning segment; sequence VISDSIRSAGLILASWLLSLG. The Vacuolar segment spans residues 281-283; that stretch reads VEN. The helical transmembrane segment at 284 to 304 threads the bilayer; the sequence is AEVLCLGLVSVTVFMLVMPLF. Topologically, residues 305-393 are cytoplasmic; that stretch reads KATGGVLLQM…QDLTLQTDYT (89 aa).

It belongs to the cation diffusion facilitator (CDF) transporter (TC 2.A.4) family.

The protein resides in the vacuole membrane. In terms of biological role, involved in sequestration of excess metal in the cytoplasm into vacuoles to maintain metal homeostasis. The polypeptide is Metal tolerance protein C2 (MTPC2) (Arabidopsis thaliana (Mouse-ear cress)).